Reading from the N-terminus, the 293-residue chain is Ribosomal protein L11 methyltransferase (293 aa).

Residues threonine 145, glycine 166, aspartate 188, and asparagine 230 each coordinate S-adenosyl-L-methionine.

Belongs to the methyltransferase superfamily. PrmA family.

Its subcellular location is the cytoplasm. It catalyses the reaction L-lysyl-[protein] + 3 S-adenosyl-L-methionine = N(6),N(6),N(6)-trimethyl-L-lysyl-[protein] + 3 S-adenosyl-L-homocysteine + 3 H(+). In terms of biological role, methylates ribosomal protein L11. This Shewanella sediminis (strain HAW-EB3) protein is Ribosomal protein L11 methyltransferase.